We begin with the raw amino-acid sequence, 56 residues long: Small ribosomal subunit protein bS21 (56 aa).

It belongs to the bacterial ribosomal protein bS21 family.

This chain is Small ribosomal subunit protein bS21, found in Synechococcus sp. (strain RCC307).